The following is a 447-amino-acid chain: Tubulin beta-5 chain (447 aa).

Gln-11, Glu-69, Ser-138, Gly-142, Thr-143, Gly-144, Asn-204, and Asn-226 together coordinate GTP. Glu-69 is a binding site for Mg(2+). The tract at residues 424-447 (QYQDATAEEEGEFDEDEELDDAMG) is disordered. The segment covering 429 to 447 (TAEEEGEFDEDEELDDAMG) has biased composition (acidic residues).

It belongs to the tubulin family. Dimer of alpha and beta chains. A typical microtubule is a hollow water-filled tube with an outer diameter of 25 nm and an inner diameter of 15 nM. Alpha-beta heterodimers associate head-to-tail to form protofilaments running lengthwise along the microtubule wall with the beta-tubulin subunit facing the microtubule plus end conferring a structural polarity. Microtubules usually have 13 protofilaments but different protofilament numbers can be found in some organisms and specialized cells. Requires Mg(2+) as cofactor.

The protein localises to the cytoplasm. It is found in the cytoskeleton. Tubulin is the major constituent of microtubules, a cylinder consisting of laterally associated linear protofilaments composed of alpha- and beta-tubulin heterodimers. Microtubules grow by the addition of GTP-tubulin dimers to the microtubule end, where a stabilizing cap forms. Below the cap, tubulin dimers are in GDP-bound state, owing to GTPase activity of alpha-tubulin. The chain is Tubulin beta-5 chain (TUBB5) from Ectocarpus variabilis (Brown alga).